Reading from the N-terminus, the 195-residue chain is Large ribosomal subunit protein eL18 (195 aa).

A Glycyl lysine isopeptide (Lys-Gly) (interchain with G-Cter in SUMO2) cross-link involves residue lysine 126. Position 137 is a phosphoserine (serine 137). Positions 158–195 (HFGKAPGTPHSHTKPYVRSKGRKFERARGRRASRGYKN) are disordered. Threonine 165 carries the phosphothreonine modification. Composition is skewed to basic residues over residues 168–178 (SHTKPYVRSKG) and 185–195 (RGRRASRGYKN). Residue lysine 171 forms a Glycyl lysine isopeptide (Lys-Gly) (interchain with G-Cter in SUMO2) linkage.

This sequence belongs to the eukaryotic ribosomal protein eL18 family. In terms of assembly, component of the large ribosomal subunit.

It is found in the cytoplasm. The protein localises to the cytosol. The protein resides in the rough endoplasmic reticulum. Its function is as follows. Component of the large ribosomal subunit. The chain is Large ribosomal subunit protein eL18 (RPL18) from Sus scrofa (Pig).